Here is a 139-residue protein sequence, read N- to C-terminus: Cytochrome c-type biogenesis protein CcmE 2 (139 aa).

Residues 1-9 (MASLKKSRR) are Cytoplasmic-facing. A helical; Signal-anchor for type II membrane protein transmembrane segment spans residues 10 to 30 (VRLILFSGVALVSATALIGYA). The Periplasmic segment spans residues 31-139 (MRDGIQFFRT…ELAEMEALRD (109 aa)). Residues histidine 122 and tyrosine 126 each contribute to the heme site.

This sequence belongs to the CcmE/CycJ family.

The protein resides in the cell inner membrane. In terms of biological role, heme chaperone required for the biogenesis of c-type cytochromes. Transiently binds heme delivered by CcmC and transfers the heme to apo-cytochromes in a process facilitated by CcmF and CcmH. The polypeptide is Cytochrome c-type biogenesis protein CcmE 2 (Ruegeria pomeroyi (strain ATCC 700808 / DSM 15171 / DSS-3) (Silicibacter pomeroyi)).